The following is a 567-amino-acid chain: Type 2 DNA topoisomerase 6 subunit B (567 aa).

Residues asparagine 46, aspartate 78, 99 to 100 (TK), 109 to 116 (GQQGIGIS), and lysine 472 contribute to the ATP site.

Belongs to the TOP6B family. In terms of assembly, homodimer. Heterotetramer of two Top6A and two Top6B chains.

It catalyses the reaction ATP-dependent breakage, passage and rejoining of double-stranded DNA.. Its function is as follows. Relaxes both positive and negative superturns and exhibits a strong decatenase activity. The polypeptide is Type 2 DNA topoisomerase 6 subunit B (Thermococcus kodakarensis (strain ATCC BAA-918 / JCM 12380 / KOD1) (Pyrococcus kodakaraensis (strain KOD1))).